The following is a 1568-amino-acid chain: Myosin-2 (1568 aa).

In terms of domain architecture, Myosin N-terminal SH3-like spans E4–N57. One can recognise a Myosin motor domain in the interval E70–S783. ATP is bound at residue G164–T171. Positions F443–E523 are actin-binding. Residues K619–R641 form a disordered region. 6 IQ domains span residues M786–K808, I809–M833, K834–N856, V857–H881, E882–N904, and T905–S934. Residues K944–L1088 are a coiled coil. Residues G1089–H1568 are non alpha-helical, tail domain. The region spanning A1223–K1498 is the Dilute domain.

It belongs to the TRAFAC class myosin-kinesin ATPase superfamily. Myosin family. Homodimer. Interacts with calmodulin (CMD1) and the myosin light chain MLC1 through its IQ repeats.

In terms of biological role, myosin heavy chain that is required for the cell cycle-regulated transport of various organelles and proteins for their segregation. Functions by binding with its tail domain to receptor proteins on organelles and exerting force with its N-terminal motor domain against actin filaments, thereby transporting its cargo along polarized actin cables. The chain is Myosin-2 (MYO2) from Saccharomyces uvarum (strain ATCC 76518 / CBS 7001 / CLIB 283 / NBRC 10550 / MCYC 623 / NCYC 2669 / NRRL Y-11845) (Yeast).